A 490-amino-acid polypeptide reads, in one-letter code: Aspartyl/glutamyl-tRNA(Asn/Gln) amidotransferase subunit B (490 aa).

The protein belongs to the GatB/GatE family. GatB subfamily. In terms of assembly, heterotrimer of A, B and C subunits.

It carries out the reaction L-glutamyl-tRNA(Gln) + L-glutamine + ATP + H2O = L-glutaminyl-tRNA(Gln) + L-glutamate + ADP + phosphate + H(+). The catalysed reaction is L-aspartyl-tRNA(Asn) + L-glutamine + ATP + H2O = L-asparaginyl-tRNA(Asn) + L-glutamate + ADP + phosphate + 2 H(+). Its function is as follows. Allows the formation of correctly charged Asn-tRNA(Asn) or Gln-tRNA(Gln) through the transamidation of misacylated Asp-tRNA(Asn) or Glu-tRNA(Gln) in organisms which lack either or both of asparaginyl-tRNA or glutaminyl-tRNA synthetases. The reaction takes place in the presence of glutamine and ATP through an activated phospho-Asp-tRNA(Asn) or phospho-Glu-tRNA(Gln). In Burkholderia pseudomallei (strain 1106a), this protein is Aspartyl/glutamyl-tRNA(Asn/Gln) amidotransferase subunit B.